A 133-amino-acid chain; its full sequence is Urease subunit beta (133 aa).

A disordered region spans residues 106 to 133 (VFRPNDSNQNAAVKNDAGEDNANKKGGK).

This sequence belongs to the urease beta subunit family. Heterotrimer of UreA (gamma), UreB (beta) and UreC (alpha) subunits. Three heterotrimers associate to form the active enzyme.

Its subcellular location is the cytoplasm. The enzyme catalyses urea + 2 H2O + H(+) = hydrogencarbonate + 2 NH4(+). It participates in nitrogen metabolism; urea degradation; CO(2) and NH(3) from urea (urease route): step 1/1. In Staphylococcus epidermidis (strain ATCC 12228 / FDA PCI 1200), this protein is Urease subunit beta.